The sequence spans 442 residues: Threonine/serine transporter TdcC (442 aa).

A run of 11 helical transmembrane segments spans residues 21–41, 44–64, 96–116, 139–159, 162–182, 206–226, 258–278, 312–332, 364–384, 388–408, and 422–442; these read TTWT…FFPI, GFGG…IAFL, GVVI…IYGV, VVAL…KDLM, VMSF…LSLI, ILVT…FSPI, ASIL…FTLS, ITLE…SFFG, LISM…NPNI, IEAM…MYAI, and ENYF…YKLL.

This sequence belongs to the amino acid/polyamine transporter 2 family. SdaC/TdcC subfamily.

Its subcellular location is the cell inner membrane. It catalyses the reaction L-threonine(in) + H(+)(in) = L-threonine(out) + H(+)(out). The enzyme catalyses L-serine(in) + H(+)(in) = L-serine(out) + H(+)(out). Involved in the import of threonine and serine into the cell, with the concomitant import of a proton (symport system). The chain is Threonine/serine transporter TdcC from Yersinia enterocolitica serotype O:8 / biotype 1B (strain NCTC 13174 / 8081).